Consider the following 548-residue polypeptide: Membrane protein insertase YidC (548 aa).

The chain crosses the membrane as a helical span at residues 6–26 (NLLVIALLFVSFMIWQAWEQD). Residues 28-54 (NPQPQTQQTTQTTTTAAGSAADQGVPA) form a disordered region. Low complexity predominate over residues 29–42 (PQPQTQQTTQTTTT). Helical transmembrane passes span 350 to 370 (FVGNWGFSIIIITFIVRGIMY), 424 to 444 (FPLIIQMPIFLALYYMLMGSI), 458 to 478 (LSAQDPYYILPILMGVTMFFI), and 499 to 519 (PVIFTVFFLWFPSGLVLYYIV).

Belongs to the OXA1/ALB3/YidC family. Type 1 subfamily. As to quaternary structure, interacts with the Sec translocase complex via SecD. Specifically interacts with transmembrane segments of nascent integral membrane proteins during membrane integration.

The protein resides in the cell inner membrane. Functionally, required for the insertion and/or proper folding and/or complex formation of integral membrane proteins into the membrane. Involved in integration of membrane proteins that insert both dependently and independently of the Sec translocase complex, as well as at least some lipoproteins. Aids folding of multispanning membrane proteins. The protein is Membrane protein insertase YidC of Salmonella arizonae (strain ATCC BAA-731 / CDC346-86 / RSK2980).